The chain runs to 410 residues: MSTADQEQPKVVEATPEDGTASSQKSTINAENENTKQNQSMEPQETSKGTSNDTKDPDNGEKNEEAAIDENSNVEAAERKRKHISTDFSDDDLEKEEHNDQSLQPTVENRASKDRDSSATPSSRQELEEKLDRILKKPKVRRTRRDEDDLEQYLDEKILRLKDEMNIAAQLDIDTLNKRIETGDTSLIAMQKVKLLPKVVSVLSKANLADTILDNNLLQSVRIWLEPLPDGSLPSFEIQKSLFAALNDLPVKTEHLKESGLGRVVIFYTKSKRVEAQLARLAEKLIAEWTRPIIGASDNYRDKRIMQLEFDSEKLRKKSVMDSAKNRKKKSKSGEDPTSRGSSVQTLYEQAAARRNRAAAPAQTTTDYKYAPVSNLSAVPTNARAVGVGSTLNNSEMYKRLTSRLNKKHK.

A disordered region spans residues 1–132; that stretch reads MSTADQEQPK…SRQELEEKLD (132 aa). Position 15 is a phosphothreonine (threonine 15). The segment covering 20–52 has biased composition (polar residues); sequence TASSQKSTINAENENTKQNQSMEPQETSKGTSN. The residue at position 23 (serine 23) is a Phosphoserine; by ATM or ATR. Serine 40 is modified (phosphoserine). The span at 53-65 shows a compositional bias: basic and acidic residues; the sequence is DTKDPDNGEKNEE. Serine 85 carries the phosphoserine modification. The residue at position 86 (threonine 86) is a Phosphothreonine. Position 89 is a phosphoserine (serine 89). The TFIIS N-terminal domain maps to 219-296; that stretch reads QSVRIWLEPL…AEWTRPIIGA (78 aa). The tract at residues 318–346 is disordered; that stretch reads KSVMDSAKNRKKKSKSGEDPTSRGSSVQT.

It belongs to the IWS1 family. In terms of assembly, interacts with ABD1, RBP1, SPT5 and SPT6.

It is found in the nucleus. Its function is as follows. Transcription factor involved in RNA polymerase II transcription regulation. May function in both SPT15/TBP post-recruitment and recruitment steps of transcription. This chain is Transcription factor SPN1 (SPN1), found in Saccharomyces cerevisiae (strain ATCC 204508 / S288c) (Baker's yeast).